The chain runs to 645 residues: 1-phosphatidylinositol 4,5-bisphosphate phosphodiesterase zeta-1 (645 aa).

An EF-hand domain is found at 42–77; that stretch reads CHFAHVKRIFKENDRHNQGRITTEDFRTIYRCIVHR. One can recognise a PI-PLC X-box domain in the interval 162–306; it reads QDMNKPLNDY…LKFKILVKNK (145 aa). Active-site residues include His177 and His222. The PI-PLC Y-box domain maps to 385–501; that stretch reads LSDLVIYTKA…GYVLKPDFLR (117 aa). The region spanning 501-625 is the C2 domain; it reads RDTTLGFNPN…KGYRRVPLFS (125 aa).

In terms of assembly, interacts via its C2 domain with PtdIns(3)P and, to a lesser extent, PtdIns(5)P in vitro. Ca(2+) is required as a cofactor.

The protein localises to the nucleus. Its subcellular location is the cytoplasm. It localises to the perinuclear region. The enzyme catalyses a 1,2-diacyl-sn-glycero-3-phospho-(1D-myo-inositol-4,5-bisphosphate) + H2O = 1D-myo-inositol 1,4,5-trisphosphate + a 1,2-diacyl-sn-glycerol + H(+). Its function is as follows. The production of the second messenger molecules diacylglycerol (DAG) and inositol 1,4,5-trisphosphate (IP3) is mediated by activated phosphatidylinositol-specific phospholipase C enzymes. In vitro, hydrolyzes PtdIns(4,5)P2 in a Ca(2+)-dependent manner. Triggers intracellular Ca(2+) oscillations in oocytes solely during M phase and is involved in inducing oocyte activation and initiating embryonic development up to the blastocyst stage. Is therefore a strong candidate for the egg-activating soluble sperm factor that is transferred from the sperm into the egg cytoplasm following gamete membrane fusion. May exert an inhibitory effect on phospholipase-C-coupled processes that depend on calcium ions and protein kinase C, including CFTR trafficking and function. This Rattus norvegicus (Rat) protein is 1-phosphatidylinositol 4,5-bisphosphate phosphodiesterase zeta-1.